The primary structure comprises 242 residues: Probable transcriptional regulatory protein Bmul_0984/BMULJ_02280 (242 aa).

Belongs to the TACO1 family.

Its subcellular location is the cytoplasm. This is Probable transcriptional regulatory protein Bmul_0984/BMULJ_02280 from Burkholderia multivorans (strain ATCC 17616 / 249).